Here is a 653-residue protein sequence, read N- to C-terminus: TRAF3-interacting protein 1 (653 aa).

Residues M1–I306 form an abolishes microtubules binding when missing region. Residues G134 to D467 form a disordered region. Basic and acidic residues-rich tracts occupy residues K145–D305, N325–I335, and E370–S384. Residues R229–R653 form a DISC1-interaction domain region. Position 437 is a phosphoserine (S437). The span at S448–S462 shows a compositional bias: polar residues. Residues A533 to A628 adopt a coiled-coil conformation.

This sequence belongs to the TRAF3IP1 family. As to quaternary structure, component of the IFT complex B, at least composed of IFT20, IFT22, IFT25, IFT27, IFT46, IFT52, TRAF3IP1/IFT54, IFT57, IFT74, IFT80, IFT81, and IFT88. Interacts with IFT88. Interacts with IL13RA1. Binds to microtubules, TRAF3 and DISC1. Interacts with MAP4.

The protein resides in the cytoplasm. The protein localises to the cytoskeleton. It is found in the cell projection. It localises to the cilium. Its subcellular location is the cilium axoneme. The protein resides in the cilium basal body. In terms of biological role, plays an inhibitory role on IL13 signaling by binding to IL13RA1. Involved in suppression of IL13-induced STAT6 phosphorylation, transcriptional activity and DNA-binding. Recruits TRAF3 and DISC1 to the microtubules. Involved in kidney development and epithelial morphogenesis. Involved in the regulation of microtubule cytoskeleton organization. Is a negative regulator of microtubule stability, acting through the control of MAP4 levels. Involved in ciliogenesis. This Rattus norvegicus (Rat) protein is TRAF3-interacting protein 1 (Traf3ip1).